The chain runs to 114 residues: T cell receptor alpha variable 10 (114 aa).

Residues 1–21 (MKKHLTTFLVILWLYFYRGNG) form the signal peptide. One can recognise an Ig-like domain in the interval 23–114 (NQVEQSPQSL…DSASYICVVS (92 aa)). Residues asparagine 39 and asparagine 45 are each glycosylated (N-linked (GlcNAc...) asparagine). Cysteine 44 and cysteine 111 are disulfide-bonded.

Alpha-beta TR is a heterodimer composed of an alpha and beta chain; disulfide-linked. The alpha-beta TR is associated with the transmembrane signaling CD3 coreceptor proteins to form the TR-CD3 (TcR or TCR). The assembly of alpha-beta TR heterodimers with CD3 occurs in the endoplasmic reticulum where a single alpha-beta TR heterodimer associates with one CD3D-CD3E heterodimer, one CD3G-CD3E heterodimer and one CD247 homodimer forming a stable octameric structure. CD3D-CD3E and CD3G-CD3E heterodimers preferentially associate with TR alpha and TR beta chains, respectively. The association of the CD247 homodimer is the last step of TcR assembly in the endoplasmic reticulum and is required for transport to the cell surface.

It is found in the cell membrane. Functionally, v region of the variable domain of T cell receptor (TR) alpha chain that participates in the antigen recognition. Alpha-beta T cell receptors are antigen specific receptors which are essential to the immune response and are present on the cell surface of T lymphocytes. Recognize peptide-major histocompatibility (MH) (pMH) complexes that are displayed by antigen presenting cells (APC), a prerequisite for efficient T cell adaptive immunity against pathogens. Binding of alpha-beta TR to pMH complex initiates TR-CD3 clustering on the cell surface and intracellular activation of LCK that phosphorylates the ITAM motifs of CD3G, CD3D, CD3E and CD247 enabling the recruitment of ZAP70. In turn ZAP70 phosphorylates LAT, which recruits numerous signaling molecules to form the LAT signalosome. The LAT signalosome propagates signal branching to three major signaling pathways, the calcium, the mitogen-activated protein kinase (MAPK) kinase and the nuclear factor NF-kappa-B (NF-kB) pathways, leading to the mobilization of transcription factors that are critical for gene expression and essential for T cell growth and differentiation. The T cell repertoire is generated in the thymus, by V-(D)-J rearrangement. This repertoire is then shaped by intrathymic selection events to generate a peripheral T cell pool of self-MH restricted, non-autoaggressive T cells. Post-thymic interaction of alpha-beta TR with the pMH complexes shapes TR structural and functional avidity. The polypeptide is T cell receptor alpha variable 10 (Homo sapiens (Human)).